A 155-amino-acid polypeptide reads, in one-letter code: Small ribosomal subunit protein uS7 (155 aa).

Belongs to the universal ribosomal protein uS7 family. In terms of assembly, part of the 30S ribosomal subunit. Contacts proteins S9 and S11.

One of the primary rRNA binding proteins, it binds directly to 16S rRNA where it nucleates assembly of the head domain of the 30S subunit. Is located at the subunit interface close to the decoding center, probably blocks exit of the E-site tRNA. This chain is Small ribosomal subunit protein uS7, found in Chlorobium limicola (strain DSM 245 / NBRC 103803 / 6330).